Reading from the N-terminus, the 188-residue chain is Elongation factor P (188 aa).

Belongs to the elongation factor P family.

It is found in the cytoplasm. It functions in the pathway protein biosynthesis; polypeptide chain elongation. Functionally, involved in peptide bond synthesis. Stimulates efficient translation and peptide-bond synthesis on native or reconstituted 70S ribosomes in vitro. Probably functions indirectly by altering the affinity of the ribosome for aminoacyl-tRNA, thus increasing their reactivity as acceptors for peptidyl transferase. The polypeptide is Elongation factor P (Mycoplasma mobile (strain ATCC 43663 / 163K / NCTC 11711) (Mesomycoplasma mobile)).